The chain runs to 109 residues: uncharacterized protein (109 aa).

The first 23 residues, 1–23, serve as a signal peptide directing secretion; sequence MKNYNFILISLFIIFFIILNISS. Asn-27 carries N-linked (GlcNAc...) asparagine glycosylation. Positions 45 to 109 are disordered; that stretch reads YQEYMENRTP…KKDQQNQQQN (65 aa). Positions 54 to 72 are enriched in low complexity; it reads PNEQQQQQQQQQNNNNPPQ. The span at 94–103 shows a compositional bias: basic and acidic residues; it reads KLKEKLKKDQ.

It is found in the secreted. This is an uncharacterized protein from Dictyostelium discoideum (Social amoeba).